We begin with the raw amino-acid sequence, 196 residues long: MSIEVVNESGFDGVNEEALIDVATFVLGEMDVHPDAEATISVVDVATMSDLHVRWMDLEGPTDVMSFPMDELTPGMGRPDAQPFGPAMLGDIILCPEFAAKQAAKAGHDMGHELALLTTHGCLHLLGYDHIEPEDEQEMFALQNELLQDWYTYCARRGVEFQPKPSNAGAFPSAADRAELDKLVPGGGIPAIGEPQ.

H120, H124, and H130 together coordinate Zn(2+).

This sequence belongs to the endoribonuclease YbeY family. Requires Zn(2+) as cofactor.

It localises to the cytoplasm. Its function is as follows. Single strand-specific metallo-endoribonuclease involved in late-stage 70S ribosome quality control and in maturation of the 3' terminus of the 16S rRNA. This Corynebacterium diphtheriae (strain ATCC 700971 / NCTC 13129 / Biotype gravis) protein is Endoribonuclease YbeY.